The primary structure comprises 231 residues: 5'-methylthioadenosine/S-adenosylhomocysteine nucleosidase (231 aa).

Glu12 (proton acceptor) is an active-site residue. Substrate-binding positions include Gly78, Met153, and 174–175 (ME). Asp198 (proton donor) is an active-site residue.

Belongs to the PNP/UDP phosphorylase family. MtnN subfamily.

It catalyses the reaction S-adenosyl-L-homocysteine + H2O = S-(5-deoxy-D-ribos-5-yl)-L-homocysteine + adenine. It carries out the reaction S-methyl-5'-thioadenosine + H2O = 5-(methylsulfanyl)-D-ribose + adenine. The catalysed reaction is 5'-deoxyadenosine + H2O = 5-deoxy-D-ribose + adenine. It functions in the pathway amino-acid biosynthesis; L-methionine biosynthesis via salvage pathway; S-methyl-5-thio-alpha-D-ribose 1-phosphate from S-methyl-5'-thioadenosine (hydrolase route): step 1/2. Catalyzes the irreversible cleavage of the glycosidic bond in both 5'-methylthioadenosine (MTA) and S-adenosylhomocysteine (SAH/AdoHcy) to adenine and the corresponding thioribose, 5'-methylthioribose and S-ribosylhomocysteine, respectively. Also cleaves 5'-deoxyadenosine, a toxic by-product of radical S-adenosylmethionine (SAM) enzymes, into 5-deoxyribose and adenine. The chain is 5'-methylthioadenosine/S-adenosylhomocysteine nucleosidase from Psychromonas ingrahamii (strain DSM 17664 / CCUG 51855 / 37).